Reading from the N-terminus, the 74-residue chain is ATP synthase subunit c (74 aa).

Transmembrane regions (helical) follow at residues 13–33 (ISVI…ASLI) and 51–71 (ILGF…AFLI).

The protein belongs to the ATPase C chain family. F-type ATPases have 2 components, F(1) - the catalytic core - and F(0) - the membrane proton channel. F(1) has five subunits: alpha(3), beta(3), gamma(1), delta(1), epsilon(1). F(0) has three main subunits: a(1), b(2) and c(10-14). The alpha and beta chains form an alternating ring which encloses part of the gamma chain. F(1) is attached to F(0) by a central stalk formed by the gamma and epsilon chains, while a peripheral stalk is formed by the delta and b chains.

It localises to the cell inner membrane. In terms of biological role, f(1)F(0) ATP synthase produces ATP from ADP in the presence of a proton or sodium gradient. F-type ATPases consist of two structural domains, F(1) containing the extramembraneous catalytic core and F(0) containing the membrane proton channel, linked together by a central stalk and a peripheral stalk. During catalysis, ATP synthesis in the catalytic domain of F(1) is coupled via a rotary mechanism of the central stalk subunits to proton translocation. Key component of the F(0) channel; it plays a direct role in translocation across the membrane. A homomeric c-ring of between 10-14 subunits forms the central stalk rotor element with the F(1) delta and epsilon subunits. This is ATP synthase subunit c from Granulibacter bethesdensis (strain ATCC BAA-1260 / CGDNIH1).